The chain runs to 185 residues: Ribosome-recycling factor (185 aa).

A disordered region spans residues 136–155 (NDDLKKLEKNGDITEDELRA).

This sequence belongs to the RRF family.

The protein localises to the cytoplasm. Responsible for the release of ribosomes from messenger RNA at the termination of protein biosynthesis. May increase the efficiency of translation by recycling ribosomes from one round of translation to another. The chain is Ribosome-recycling factor from Bacillus velezensis (strain DSM 23117 / BGSC 10A6 / LMG 26770 / FZB42) (Bacillus amyloliquefaciens subsp. plantarum).